Consider the following 370-residue polypeptide: UDP-N-acetylglucosamine--N-acetylmuramyl-(pentapeptide) pyrophosphoryl-undecaprenol N-acetylglucosamine transferase (370 aa).

UDP-N-acetyl-alpha-D-glucosamine-binding positions include 15 to 17, Asn126, Arg169, Ser197, and Gln299; that span reads TGG.

This sequence belongs to the glycosyltransferase 28 family. MurG subfamily.

The protein localises to the cell inner membrane. The enzyme catalyses di-trans,octa-cis-undecaprenyl diphospho-N-acetyl-alpha-D-muramoyl-L-alanyl-D-glutamyl-meso-2,6-diaminopimeloyl-D-alanyl-D-alanine + UDP-N-acetyl-alpha-D-glucosamine = di-trans,octa-cis-undecaprenyl diphospho-[N-acetyl-alpha-D-glucosaminyl-(1-&gt;4)]-N-acetyl-alpha-D-muramoyl-L-alanyl-D-glutamyl-meso-2,6-diaminopimeloyl-D-alanyl-D-alanine + UDP + H(+). The protein operates within cell wall biogenesis; peptidoglycan biosynthesis. In terms of biological role, cell wall formation. Catalyzes the transfer of a GlcNAc subunit on undecaprenyl-pyrophosphoryl-MurNAc-pentapeptide (lipid intermediate I) to form undecaprenyl-pyrophosphoryl-MurNAc-(pentapeptide)GlcNAc (lipid intermediate II). This is UDP-N-acetylglucosamine--N-acetylmuramyl-(pentapeptide) pyrophosphoryl-undecaprenol N-acetylglucosamine transferase from Methylorubrum populi (strain ATCC BAA-705 / NCIMB 13946 / BJ001) (Methylobacterium populi).